Reading from the N-terminus, the 149-residue chain is Large ribosomal subunit protein bL9 (149 aa).

The protein belongs to the bacterial ribosomal protein bL9 family.

In terms of biological role, binds to the 23S rRNA. In Bacillus licheniformis (strain ATCC 14580 / DSM 13 / JCM 2505 / CCUG 7422 / NBRC 12200 / NCIMB 9375 / NCTC 10341 / NRRL NRS-1264 / Gibson 46), this protein is Large ribosomal subunit protein bL9.